A 724-amino-acid polypeptide reads, in one-letter code: ATPase family protein 2 homolog (724 aa).

ATP contacts are provided by residues 281–287 and 503–508; these read PGSGKTL and GCSKTL.

It belongs to the AAA ATPase family. AFG2 subfamily. As to quaternary structure, homohexamer; ATP binding induces oligomerization. Forms a ring-shaped particle of about 12 nm diameter, that displays 6-fold radial symmetry. Interacts (via N-terminus) with kinase air-2; the interaction is direct and inhibits air-2 kinase activity in an ATPase-dependent manner.

The protein resides in the cytoplasm. It catalyses the reaction ATP + H2O = ADP + phosphate + H(+). In terms of biological role, ATP-dependent chaperone which uses the energy provided by ATP hydrolysis to generate mechanical force to disassemble protein complexes. Required for various steps of embryonic mitosis including centrosome duplication, spindle assembly, ER dynamics and cell cycle progression. Regulates the stability and activity of kinase air-2, a component of the chromosomal passenger complex (CPC). Inhibits air-2 kinase activity from metaphase to late telophase and negatively regulates air-2 stability during mitotic exit. Controls ER transition into sheet-like structures at the onset of mitosis, possibly by regulating homotypic membrane fusion. The chain is ATPase family protein 2 homolog from Caenorhabditis elegans.